We begin with the raw amino-acid sequence, 492 residues long: Metal cation symporter ZIP14 (492 aa).

The signal sequence occupies residues 1 to 30 (MKLLLLHPAFQSCLLLTLLGLWRTTPEAHA). At 31 to 157 (SSLGAPAISA…PSAVEVWGYG (127 aa)) the chain is on the extracellular side. N-linked (GlcNAc...) asparagine glycosylation is found at Asn-77, Asn-87, and Asn-102. A helical membrane pass occupies residues 158–178 (LLCVTVISLCSLLGASVVPFM). At 179–186 (KKTFYKRL) the chain is on the cytoplasmic side. A helical membrane pass occupies residues 187-207 (LLYFIALAIGTLYSNALFQLI). The Extracellular portion of the chain corresponds to 208–224 (PEAFGFNPLEDYYVSKS). A helical transmembrane segment spans residues 225–245 (AVVFGGFYLFFFTEKILKILL). The Cytoplasmic portion of the chain corresponds to 246–397 (KQKNEHHHGH…LLNAGMSIQQ (152 aa)). Positions 251 to 258 (HHHGHSHY) match the HHHGHXHX-motif motif. The XEXPHE-motif signature appears at 376–381 (EEFPHE). Residues 398-418 (ALFFNFLSACCCYLGLAFGIL) traverse the membrane as a helical segment. Over 419–424 (AGSHFS) the chain is Extracellular. The chain crosses the membrane as a helical span at residues 425–445 (ANWIFALAGGMFLYISLADMF). Residues 446 to 460 (PEMNEVCQEDERKGS) lie on the Cytoplasmic side of the membrane. The helical transmembrane segment at 461 to 481 (ILIPFIIQNLGLLTGFTIMVV) threads the bilayer. At 482 to 492 (LTMYSGQIQIG) the chain is on the extracellular side.

It belongs to the ZIP transporter (TC 2.A.5) family. In terms of assembly, homotrimer. In terms of processing, ubiquitinated. Ubiquitination occurs upon iron depletion. The ubiquitinated form undergoes proteasomal degradation. Post-translationally, N-glycosylated. N-glycosylation at Asn-102 is required for iron-regulated extraction of the transporter from membranes and subsequent proteasomal degradation. In terms of tissue distribution, ubiquitously expressed, with higher expression in liver, pancreas, fetal liver, thyroid gland, left and right ventricle, right atrium and fetal heart. Weakly expressed in spleen, thymus, and peripheral blood leukocytes. Expressed in liver and in brain by large neurons in the globus pallidus, the insular cortex and the dentate nucleus and to a lower extent in the putamen and the caudate nucleus (at protein level). Expressed in osteoblasts and giant osteoclast-like cells, but not in osteocytes found osteoblastoma and giant cell tumors (at protein level). Expressed by microvascular capillary endothelial cells that constitute the blood-brain barrier (at protein level). Expressed by macrophages. Widely expressed but not detected in brain, heart, skeletal muscle, placenta and fetal skin.

Its subcellular location is the cell membrane. The protein localises to the apical cell membrane. The protein resides in the basolateral cell membrane. It is found in the early endosome membrane. It localises to the late endosome membrane. Its subcellular location is the lysosome membrane. It catalyses the reaction Zn(2+)(out) + 2 hydrogencarbonate(out) = Zn(2+)(in) + 2 hydrogencarbonate(in). It carries out the reaction Mn(2+)(out) + 2 hydrogencarbonate(out) = Mn(2+)(in) + 2 hydrogencarbonate(in). The catalysed reaction is Fe(2+)(out) + 2 hydrogencarbonate(out) = Fe(2+)(in) + 2 hydrogencarbonate(in). The enzyme catalyses Cd(2+)(out) + 2 hydrogencarbonate(out) = Cd(2+)(in) + 2 hydrogencarbonate(in). Functionally, electroneutral transporter of the plasma membrane mediating the cellular uptake of the divalent metal cations zinc, manganese and iron that are important for tissue homeostasis, metabolism, development and immunity. Functions as an energy-dependent symporter, transporting through the membranes an electroneutral complex composed of a divalent metal cation and two bicarbonate anions. Beside these endogenous cellular substrates, can also import cadmium a non-essential metal which is cytotoxic and carcinogenic. Controls the cellular uptake by the intestinal epithelium of systemic zinc, which is in turn required to maintain tight junctions and the intestinal permeability. Modifies the activity of zinc-dependent phosphodiesterases, thereby indirectly regulating G protein-coupled receptor signaling pathways important for gluconeogenesis and chondrocyte differentiation. Regulates insulin receptor signaling, glucose uptake, glycogen synthesis and gluconeogenesis in hepatocytes through the zinc-dependent intracellular catabolism of insulin. Through zinc cellular uptake also plays a role in the adaptation of cells to endoplasmic reticulum stress. Major manganese transporter of the basolateral membrane of intestinal epithelial cells, it plays a central role in manganese systemic homeostasis through intestinal manganese uptake. Also involved in manganese extracellular uptake by cells of the blood-brain barrier. May also play a role in manganese and zinc homeostasis participating in their elimination from the blood through the hepatobiliary excretion. Also functions in the extracellular uptake of free iron. May also function intracellularly and mediate the transport from endosomes to cytosol of iron endocytosed by transferrin. Plays a role in innate immunity by regulating the expression of cytokines by activated macrophages. This Homo sapiens (Human) protein is Metal cation symporter ZIP14.